Consider the following 212-residue polypeptide: Transcription antitermination protein NusB (212 aa).

The protein belongs to the NusB family.

Involved in transcription antitermination. Required for transcription of ribosomal RNA (rRNA) genes. Binds specifically to the boxA antiterminator sequence of the ribosomal RNA (rrn) operons. The sequence is that of Transcription antitermination protein NusB from Gloeothece citriformis (strain PCC 7424) (Cyanothece sp. (strain PCC 7424)).